The sequence spans 259 residues: UPF0246 protein Pfl01_0961 (259 aa).

It belongs to the UPF0246 family.

The protein is UPF0246 protein Pfl01_0961 of Pseudomonas fluorescens (strain Pf0-1).